The primary structure comprises 308 residues: Acetaldehyde dehydrogenase 2 (308 aa).

12–15 (SGNI) contributes to the NAD(+) binding site. Residue cysteine 127 is the Acyl-thioester intermediate of the active site. Residues 162–170 (SAGPGTRAN) and asparagine 281 each bind NAD(+).

It belongs to the acetaldehyde dehydrogenase family.

The enzyme catalyses acetaldehyde + NAD(+) + CoA = acetyl-CoA + NADH + H(+). In Mycobacterium marinum (strain ATCC BAA-535 / M), this protein is Acetaldehyde dehydrogenase 2.